A 528-amino-acid chain; its full sequence is GMP synthase [glutamine-hydrolyzing] (528 aa).

The region spanning 3-199 (KVAIIDFGSQ…FLDIAGCQKD (197 aa)) is the Glutamine amidotransferase type-1 domain. Residue Cys83 is the Nucleophile of the active site. Active-site residues include His174 and Glu176. The 195-residue stretch at 200–394 (WTVTSFIDDQ…LGISTEILMR (195 aa)) folds into the GMPS ATP-PPase domain. 227–233 (SGGVDSS) is a binding site for ATP.

In terms of assembly, homodimer.

It carries out the reaction XMP + L-glutamine + ATP + H2O = GMP + L-glutamate + AMP + diphosphate + 2 H(+). The protein operates within purine metabolism; GMP biosynthesis; GMP from XMP (L-Gln route): step 1/1. Catalyzes the synthesis of GMP from XMP. This chain is GMP synthase [glutamine-hydrolyzing], found in Ehrlichia ruminantium (strain Welgevonden).